Reading from the N-terminus, the 186-residue chain is MGVKSDIWIRNMAKNFNMISPFEEKQVRKGIISYGVSSYGYDIRVSDEFMVFTNINSTVVDPKNFDERNVVNIKGDCIIPPNSFALCRSVEYFKMPRDVLAICVGKSTYARCGIIVNVTPIEPEWEGHITIEISNTTPLPAKIYANEGIAQLIFLGADDNICETSYADKSGKYHGQKGITLPKVDK.

106–111 (KSTYAR) lines the dCTP pocket. Catalysis depends on Glu132, which acts as the Proton donor/acceptor. 3 residues coordinate dCTP: Gln151, Tyr166, and Gln176.

This sequence belongs to the dCTP deaminase family. In terms of assembly, homotrimer.

It catalyses the reaction dCTP + H2O + H(+) = dUTP + NH4(+). Its pathway is pyrimidine metabolism; dUMP biosynthesis; dUMP from dCTP (dUTP route): step 1/2. Catalyzes the deamination of dCTP to dUTP. This chain is dCTP deaminase, found in Nautilia profundicola (strain ATCC BAA-1463 / DSM 18972 / AmH).